The primary structure comprises 477 residues: Glycogen synthase (477 aa).

Residue Lys-15 participates in ADP-alpha-D-glucose binding.

This sequence belongs to the glycosyltransferase 1 family. Bacterial/plant glycogen synthase subfamily.

It carries out the reaction [(1-&gt;4)-alpha-D-glucosyl](n) + ADP-alpha-D-glucose = [(1-&gt;4)-alpha-D-glucosyl](n+1) + ADP + H(+). Its pathway is glycan biosynthesis; glycogen biosynthesis. Synthesizes alpha-1,4-glucan chains using ADP-glucose. In Streptococcus pneumoniae (strain ATCC 700669 / Spain 23F-1), this protein is Glycogen synthase.